We begin with the raw amino-acid sequence, 380 residues long: MASLAAANAEFCFNLFREMDDNQGNGNVFFSSLSLFAALALVRLGAQDDSLSQIDKLLHVNTASGYGNSSNSQSGLQSQLKRVFSDINASHKDYDLSIVNGLFAEKVYGFHKDYIECAEKLYDAKVERVDFTNHLEDTRRNINKWVENETHGKIKNVIGEGGISSSAVMVLVNAVYFKGKWQSAFTKSETINCHFKSPKCSGKAVAMMHQERKFNLSVIEDPSMKILELRYNGGINMYVLLPENDLSEIENKLTFQNLMEWTNPRRMTSKYVEVFFPQFKIEKNYEMKQYLRALGLKDIFDESKADLSGIASGGRLYISRMMHKSYIEVTEEGTEATAATGSNIVEKQLPQSTLFRADHPFLFVIRKDDIILFSGKVSCP.

Serine 217 and serine 223 each carry phosphoserine.

Belongs to the serpin family. Ov-serpin subfamily. As to expression, predominantly expressed in mesangial cells. Expressed in the epidermis of the whole body.

Its subcellular location is the cytoplasm. Its function is as follows. Might function as an inhibitor of Lys-specific proteases. Might influence the maturation of megakaryocytes via its action as a serpin. The protein is Serpin B7 (SERPINB7) of Homo sapiens (Human).